A 169-amino-acid polypeptide reads, in one-letter code: Ribosome maturation factor RimM (169 aa).

The region spanning 97 to 169 (EDEVYFKDLI…KIVVDWEYDY (73 aa)) is the PRC barrel domain.

Belongs to the RimM family. As to quaternary structure, binds ribosomal protein uS19.

It localises to the cytoplasm. Its function is as follows. An accessory protein needed during the final step in the assembly of 30S ribosomal subunit, possibly for assembly of the head region. Essential for efficient processing of 16S rRNA. May be needed both before and after RbfA during the maturation of 16S rRNA. It has affinity for free ribosomal 30S subunits but not for 70S ribosomes. The protein is Ribosome maturation factor RimM of Francisella tularensis subsp. tularensis (strain WY96-3418).